A 100-amino-acid polypeptide reads, in one-letter code: Integration host factor subunit alpha (100 aa).

Belongs to the bacterial histone-like protein family. As to quaternary structure, heterodimer of an alpha and a beta chain.

This protein is one of the two subunits of integration host factor, a specific DNA-binding protein that functions in genetic recombination as well as in transcriptional and translational control. This Jannaschia sp. (strain CCS1) protein is Integration host factor subunit alpha.